A 363-amino-acid chain; its full sequence is Two-pore potassium channel 1 (363 aa).

Positions 1–61 are disordered; the sequence is MSSDAARTPL…DDVKIDEPPP (61 aa). At 1-78 the chain is on the cytoplasmic side; the sequence is MSSDAARTPL…FSDLNPNLRR (78 aa). Positions 31 to 42 are enriched in basic residues; sequence SSRKRRLRRSRS. The chain crosses the membrane as a helical span at residues 79–99; the sequence is VIMFLALYLTIGTLCFYLVRD. An intramembrane region (pore-forming) is located at residues 111-130; sequence DALYFCIVTMTTVGYGDLVP. Residues 137–157 form a helical membrane-spanning segment; sequence LLACAFVFSGMVLVGHLLSRA. Residues 158 to 197 are Cytoplasmic-facing; the sequence is ADYLVEKQEALLVRAFHLRQSFGPTDILKELHTNKLRYKC. Residues 198–218 form a helical membrane-spanning segment; it reads YATCLVLVVLFIVGTIFLVMV. Residues 225-244 constitute an intramembrane region (pore-forming); it reads SAFYCVCSTVTTLGYGDKSF. A helical transmembrane segment spans residues 251-271; it reads LFAVFWILTSSICLAQFFLYV. The Cytoplasmic segment spans residues 272–363; the sequence is AELNTENKQR…LAQTTSQIQR (92 aa). EF-hand domains are found at residues 288–323 and 327–362; these read LTRR…EMGK and KDIS…SQIQ. Residues 296–298 carry the Endoplasmic reticulum release signal motif; it reads DLE. Residues D301, D303, D305, E312, D340, D342, S344, T346, and D351 each contribute to the Ca(2+) site.

The protein belongs to the two pore domain potassium channel (TC 1.A.1.7) family. In terms of assembly, homodimer. Interacts with GRF1 and GRF6, but only GRF6 modulates the channel activity. Phosphorylation at Ser-42 increases and stabilizes the interaction with 14-3-3 proteins. In terms of tissue distribution, detected in mesophyll cells, guard cells and vascular tissues of the leaves. Expressed in the hilum, where the funiculus is attached during fruit maturation and in the embryo. Also expressed at a lower level in seedlings, root tips and elongation zones, and flowers. Could be detected in mitotically active tissues.

Its subcellular location is the vacuole membrane. Could be activated by protein kinase C. Strongly induced by calcium. Blocked by barium, tetraethylammonium (TEA), quinine and quinidine. Its function is as follows. Voltage-independent, large conductance and potassium-selective tonoplast ion channel. Regulated by cytoplasmic calcium and pH. Does not mediate slow-vacuolar (SV) ionic currents, but essential to establish VK currents. Has some permeability for Rb(+) and NH(4)(+), but none for Na(+), Cs(+) or Li(+). Involved in intracellular K(+) redistribution and/or K(+) retranslocation between different tissues. In Arabidopsis thaliana (Mouse-ear cress), this protein is Two-pore potassium channel 1 (TPK1).